Here is a 152-residue protein sequence, read N- to C-terminus: Ubiquitin-activating enzyme E1 Y (152 aa).

Cys51 acts as the Glycyl thioester intermediate in catalysis.

The protein belongs to the ubiquitin-activating E1 family. Monomer.

It catalyses the reaction ATP + ubiquitin + [E1 ubiquitin-activating enzyme]-L-cysteine = AMP + diphosphate + S-ubiquitinyl-[E1 ubiquitin-activating enzyme]-L-cysteine.. It participates in protein modification; protein ubiquitination. In terms of biological role, activates ubiquitin by first adenylating its C-terminal glycine residue with ATP, and thereafter linking this residue to the side chain of a cysteine residue in E1, yielding a ubiquitin-E1 thioester and free AMP. The Y chromosome form could be involved in the survival and proliferation of differentiating spermatogonia. In Osphranter rufus (Red kangaroo), this protein is Ubiquitin-activating enzyme E1 Y (UBE1Y).